Consider the following 425-residue polypeptide: AFP homolog 2 (425 aa).

2 disordered regions span residues 1 to 207 (MDDD…SGTE) and 288 to 327 (PFAG…DNSN). The interval 7–17 (LELSLGLSCGG) is necessary and sufficient for the interaction with TOPLESS. Residues 20 to 34 (GKAKGNNNNNAGSSS) show a composition bias toward low complexity. The segment covering 37–54 (YRAEGGDRSAKVIDDFKN) has biased composition (basic and acidic residues). Positions 66–81 (PSSGSQRSDSGQQPPQ) are enriched in low complexity. Residues 124 to 140 (NDDKKKEKDSSHVDMHE) show a composition bias toward basic and acidic residues. 3 stretches are compositionally biased toward polar residues: residues 146-158 (SHVS…GSTA), 185-197 (TDTN…TGQR), and 288-299 (PFAGRVPSNSAT). The tract at residues 322 to 425 (TGDNSNLNTA…MGMTAASAHT (104 aa)) is necessary and sufficient for the interaction with the JAZ proteins.

The protein belongs to the Ninja family. In terms of assembly, component of a complex at least composed of TOPLESS, TPR2, TPR3, TIFY4B/PPD2, MYC3/ATR2 and TIFY3B/JAZ12. Interacts (via C-terminus) with TIFY10A/JAZ1; TIFY10B/JAZ2; TIFY6B/JAZ3; TIFY6A/JAZ4; TIFY11A/JAZ5; TIFY11B/JAZ6; TIFY7/JAZ9; TIFY9/JAZ10; TIFY3A/JAZ11; TIFY3B/JAZ12; TIFY4A/PPD1; TIFY4B/PPD2 and TIFY8 (via TIFY domain). Interacts with TOPLESS. Interacts with PAT1H1.

The protein localises to the nucleus. Its function is as follows. Acts as a transcriptional repressor. Negative regulator of jasmonate responses. Connects the JAZ proteins and the non-JAZ protein TIFY8 with the TOPLESS corepressors. This chain is AFP homolog 2, found in Arabidopsis thaliana (Mouse-ear cress).